A 245-amino-acid chain; its full sequence is DNA repair protein RecO (245 aa).

Belongs to the RecO family.

Its function is as follows. Involved in DNA repair and RecF pathway recombination. This chain is DNA repair protein RecO, found in Bartonella bacilliformis (strain ATCC 35685 / KC583 / Herrer 020/F12,63).